A 376-amino-acid polypeptide reads, in one-letter code: Homeobox protein extradenticle (376 aa).

The interval 1–37 (MEDPNRMLAHTGGMMAPQGYGLSGQDDGQNAGSENEV) is disordered. Positions 38-237 (RKQKDIGEIL…VMILRSRFLD (200 aa)) constitute a PBC domain. The tract at residues 45 to 124 (EILQQIMSIS…EGVAGPEKGG (80 aa)) is PBC-A. The PBC-B stretch occupies residues 127-237 (AAAASAAAAS…VMILRSRFLD (111 aa)). The segment at residues 238 to 300 (ARRKRRNFSK…NKRIRYKKNI (63 aa)) is a DNA-binding region (homeobox; TALE-type). A compositionally biased stretch (low complexity) spans 318–335 (ASPYSMAGPPSGTTTPMM). The tract at residues 318 to 376 (ASPYSMAGPPSGTTTPMMSPAPPQDSMGYPMGSGGYDQQQPYDNSMGGYDPNLHQDLSP) is disordered.

The protein belongs to the TALE/PBX homeobox family. Interacts with Ubx and hth. In terms of tissue distribution, prior to full germband retraction it is ubiquitously present, after germband retraction, mostly present in the anterior portion of the ventral nerve cord.

It localises to the nucleus. Functionally, transcription factor which acts with the selector homeodomain proteins altering the regulation of downstream target genes such as wingless (wg), teashirt (tsh) and decapentaplegic (dpp), thus affecting segmental identity. Delimits the eye field and prevent inappropriate eye development. Required for proper localization of chordotonal organs within the peripheral nervous system. This Drosophila melanogaster (Fruit fly) protein is Homeobox protein extradenticle (exd).